A 174-amino-acid polypeptide reads, in one-letter code: Small ribosomal subunit protein uS5 (174 aa).

One can recognise an S5 DRBM domain in the interval 19–82 (LREKMVAINR…DEARRKLKKI (64 aa)).

Belongs to the universal ribosomal protein uS5 family. As to quaternary structure, part of the 30S ribosomal subunit. Contacts proteins S4 and S8.

Its function is as follows. With S4 and S12 plays an important role in translational accuracy. In terms of biological role, located at the back of the 30S subunit body where it stabilizes the conformation of the head with respect to the body. The chain is Small ribosomal subunit protein uS5 from Aromatoleum aromaticum (strain DSM 19018 / LMG 30748 / EbN1) (Azoarcus sp. (strain EbN1)).